We begin with the raw amino-acid sequence, 101 residues long: Urease subunit beta (101 aa).

This sequence belongs to the urease beta subunit family. Heterotrimer of UreA (gamma), UreB (beta) and UreC (alpha) subunits. Three heterotrimers associate to form the active enzyme.

The protein localises to the cytoplasm. The catalysed reaction is urea + 2 H2O + H(+) = hydrogencarbonate + 2 NH4(+). Its pathway is nitrogen metabolism; urea degradation; CO(2) and NH(3) from urea (urease route): step 1/1. This is Urease subunit beta from Nostoc punctiforme (strain ATCC 29133 / PCC 73102).